Here is a 376-residue protein sequence, read N- to C-terminus: Methionine import ATP-binding protein MetN 1 (376 aa).

One can recognise an ABC transporter domain in the interval Val34 to Leu273. Gly70–Ser77 provides a ligand contact to ATP.

Belongs to the ABC transporter superfamily. Methionine importer (TC 3.A.1.24) family. In terms of assembly, the complex is composed of two ATP-binding proteins (MetN), two transmembrane proteins (MetI) and a solute-binding protein (MetQ).

It localises to the cell inner membrane. The catalysed reaction is L-methionine(out) + ATP + H2O = L-methionine(in) + ADP + phosphate + H(+). The enzyme catalyses D-methionine(out) + ATP + H2O = D-methionine(in) + ADP + phosphate + H(+). Functionally, part of the ABC transporter complex MetNIQ involved in methionine import. Responsible for energy coupling to the transport system. In Pseudomonas syringae pv. tomato (strain ATCC BAA-871 / DC3000), this protein is Methionine import ATP-binding protein MetN 1.